A 524-amino-acid chain; its full sequence is Strychnine-10-hydroxylase (524 aa).

A helical transmembrane segment spans residues 6-26 (LYIHTAILGLISLFLILHFVF). Cysteine 466 provides a ligand contact to heme.

Belongs to the cytochrome P450 family. Heme is required as a cofactor.

It localises to the membrane. The enzyme catalyses strychnine + reduced [NADPH--hemoprotein reductase] + O2 = 10-hydroxystrychnine + oxidized [NADPH--hemoprotein reductase] + H2O + H(+). Its pathway is alkaloid biosynthesis. Its function is as follows. Monooxygenase involved in the biosynthesis of curare monoterpene indole alkaloids (MIAs), natural products such as strychnine, a neurotoxic compound used as a pesticide to control rodents, and its pharmacologically active derivatives, including brucine, used to regulate blood pressure. Curare alkaloids act as animal glycine receptor antagonists. Catalyzes the conversion of strychnine to 10-OH strychnine. In Strychnos nux-vomica (Poison nut), this protein is Strychnine-10-hydroxylase.